The primary structure comprises 390 residues: S-adenosylmethionine synthase 2 (390 aa).

Position 9 (glutamate 9) interacts with Mg(2+). An ATP-binding site is contributed by histidine 15. Position 43 (glutamate 43) interacts with K(+). L-methionine-binding residues include glutamate 56 and glutamine 99. ATP-binding positions include 167–169 (DGK), 235–238 (SGRF), aspartate 246, 252–253 (RK), alanine 269, lysine 273, and lysine 277. Aspartate 246 is an L-methionine binding site. Lysine 277 is a binding site for L-methionine.

It belongs to the AdoMet synthase family. In terms of assembly, homotetramer. Requires Mn(2+) as cofactor. Mg(2+) serves as cofactor. It depends on Co(2+) as a cofactor. The cofactor is K(+).

The protein resides in the cytoplasm. The catalysed reaction is L-methionine + ATP + H2O = S-adenosyl-L-methionine + phosphate + diphosphate. It functions in the pathway amino-acid biosynthesis; S-adenosyl-L-methionine biosynthesis; S-adenosyl-L-methionine from L-methionine: step 1/1. Functionally, catalyzes the formation of S-adenosylmethionine from methionine and ATP. The reaction comprises two steps that are both catalyzed by the same enzyme: formation of S-adenosylmethionine (AdoMet) and triphosphate, and subsequent hydrolysis of the triphosphate. In Solanum tuberosum (Potato), this protein is S-adenosylmethionine synthase 2 (METK2).